Here is a 136-residue protein sequence, read N- to C-terminus: uncharacterized protein (136 aa).

The first 19 residues, 1 to 19 (MMTAAKRLGLYSALRACSA), serve as a signal peptide directing secretion. The chain crosses the membrane as a helical span at residues 75-97 (FWFSHTCLVFGSNTILFASLNSF).

The protein resides in the membrane. This is an uncharacterized protein from Saccharomyces cerevisiae (strain ATCC 204508 / S288c) (Baker's yeast).